We begin with the raw amino-acid sequence, 152 residues long: Transcriptional regulator MraZ (152 aa).

SpoVT-AbrB domains are found at residues 5–52 (ATLV…PLPE) and 81–124 (ASEC…DETT).

Belongs to the MraZ family. Forms oligomers.

The protein localises to the cytoplasm. The protein resides in the nucleoid. Negatively regulates its own expression and that of the subsequent genes in the proximal part of the division and cell wall (dcw) gene cluster. Acts by binding directly to DNA. May also regulate the expression of genes outside the dcw cluster. This is Transcriptional regulator MraZ from Escherichia coli O45:K1 (strain S88 / ExPEC).